The primary structure comprises 510 residues: Ribonuclease Y (510 aa).

The chain crosses the membrane as a helical span at residues 2-22 (IYIIFSSIFAGFILGFLVRVF). The KH domain occupies 198 to 258 (TVASVELPND…IRKELAKRTL (61 aa)). The 96-residue stretch at 324 to 419 (VLSHSKETAI…VQIADAISAS (96 aa)) folds into the HD domain.

This sequence belongs to the RNase Y family.

The protein localises to the cell membrane. Its function is as follows. Endoribonuclease that initiates mRNA decay. The polypeptide is Ribonuclease Y (Borrelia garinii subsp. bavariensis (strain ATCC BAA-2496 / DSM 23469 / PBi) (Borreliella bavariensis)).